The chain runs to 109 residues: Ribulose bisphosphate carboxylase small subunit (109 aa).

This sequence belongs to the RuBisCO small chain family. Heterohexadecamer of 8 large and 8 small subunits. Forms complexes of many stoichiometries with Raf1 and RbcL.

It localises to the carboxysome. Its function is as follows. RuBisCO catalyzes two reactions: the carboxylation of D-ribulose 1,5-bisphosphate, the primary event in carbon dioxide fixation, as well as the oxidative fragmentation of the pentose substrate in the photorespiration process. Both reactions occur simultaneously and in competition at the same active site. Although the small subunit is not catalytic it is essential for maximal activity. This Nostoc sp. (strain PCC 7120 / SAG 25.82 / UTEX 2576) protein is Ribulose bisphosphate carboxylase small subunit.